An 851-amino-acid chain; its full sequence is Periplasmic nitrate reductase (851 aa).

The tat-type signal signal peptide spans methionine 1–alanine 29. The region spanning valine 44–aspartate 100 is the 4Fe-4S Mo/W bis-MGD-type domain. [4Fe-4S] cluster is bound by residues cysteine 51, cysteine 54, cysteine 58, and cysteine 86. Mo-bis(molybdopterin guanine dinucleotide)-binding positions include lysine 88, glutamine 155, asparagine 180, cysteine 184, tryptophan 217–methionine 224, serine 248–histidine 252, and glutamine 267–aspartate 269. The interval aspartate 317–threonine 338 is disordered. Residues methionine 388, glutamine 392, asparagine 498, serine 524–aspartate 525, lysine 547, aspartate 574, and threonine 741–threonine 750 each bind Mo-bis(molybdopterin guanine dinucleotide). Phenylalanine 817 is a substrate binding site. Asparagine 825 and lysine 842 together coordinate Mo-bis(molybdopterin guanine dinucleotide).

Belongs to the prokaryotic molybdopterin-containing oxidoreductase family. NasA/NapA/NarB subfamily. As to quaternary structure, component of the periplasmic nitrate reductase NapAB complex composed of NapA and NapB. It depends on [4Fe-4S] cluster as a cofactor. The cofactor is Mo-bis(molybdopterin guanine dinucleotide). Post-translationally, predicted to be exported by the Tat system. The position of the signal peptide cleavage has not been experimentally proven.

The protein resides in the periplasm. It catalyses the reaction 2 Fe(II)-[cytochrome] + nitrate + 2 H(+) = 2 Fe(III)-[cytochrome] + nitrite + H2O. In terms of biological role, catalytic subunit of the periplasmic nitrate reductase complex NapAB. Receives electrons from NapB and catalyzes the reduction of nitrate to nitrite. The polypeptide is Periplasmic nitrate reductase (Leptothrix cholodnii (strain ATCC 51168 / LMG 8142 / SP-6) (Leptothrix discophora (strain SP-6))).